Consider the following 269-residue polypeptide: Shikimate dehydrogenase (NADP(+)) (269 aa).

Residues 14 to 16 (SLS) and Thr61 each bind shikimate. Residue Lys65 is the Proton acceptor of the active site. Glu76 is an NADP(+) binding site. Shikimate contacts are provided by Asn85 and Asp99. NADP(+)-binding positions include 123 to 127 (GAGGA), 146 to 151 (NRTPER), and Ile209. Shikimate is bound at residue Tyr211. Gly231 contributes to the NADP(+) binding site.

This sequence belongs to the shikimate dehydrogenase family. Homodimer.

The enzyme catalyses shikimate + NADP(+) = 3-dehydroshikimate + NADPH + H(+). It participates in metabolic intermediate biosynthesis; chorismate biosynthesis; chorismate from D-erythrose 4-phosphate and phosphoenolpyruvate: step 4/7. Functionally, involved in the biosynthesis of the chorismate, which leads to the biosynthesis of aromatic amino acids. Catalyzes the reversible NADPH linked reduction of 3-dehydroshikimate (DHSA) to yield shikimate (SA). The chain is Shikimate dehydrogenase (NADP(+)) from Methanothrix thermoacetophila (strain DSM 6194 / JCM 14653 / NBRC 101360 / PT) (Methanosaeta thermophila).